We begin with the raw amino-acid sequence, 393 residues long: BEN domain-containing protein 5 (393 aa).

Positions 169 to 212 form a coiled coil; sequence RVLYEELLRSYQQQQQEMKHIQHELERTRKQLVQQAKKLKDYGS. Residues 274 to 380 enclose the BEN domain; that stretch reads GSGVWVNEEK…EKIMDINKSC (107 aa).

In terms of biological role, may act as a transcriptional repressor. This is BEN domain-containing protein 5 (bend5) from Xenopus laevis (African clawed frog).